A 397-amino-acid chain; its full sequence is MAGYEYVSPEQLAGFDKYKYSAVDTNPLSLYVMHPFWNTIVKVFPTWLAPNLITFSGFLLVVFNFLLMAYFDPDFYASAPGHKHVPDWVWIVVGILNFVAYTLDGVDGKQARRTNSSTPLGELFDHGLDSWSCVYFVVTVYSIFGRGSTGVSVFVLYLLLWVVLFSFILSHWEKYNTGILFLPWGYDISQVTISFVYIVTAVVGVEAWYEPFLFNFLYRDLFTAMIIGCALCVTLPMSLLNFFRSYKNNTLKLNSVYEAMVPLFSPCLLFILSTAWILWSPSDILELHPRVFYFMVGTAFANSTCQLIVCQMSSTRCPTLNWLLVPLFLVVLVVNLGVASYVESILLYTLTTAFTLAHIHYGVRVVKQLSSHFQIYPFSLRKPNSDULGMEEKNIGL.

An N-acetylalanine modification is found at alanine 2. Transmembrane regions (helical) follow at residues 47–69 (WLAP…LLMA), 84–103 (HVPD…AYTL), 123–145 (LFDH…SIFG), 150–172 (GVSV…LSHW), 179–201 (ILFL…IVTA), 221–243 (LFTA…LNFF), 256–278 (VYEA…AWIL), 291–310 (VFYF…LIVC), 317–339 (CPTL…LGVA), and 344–366 (SILL…VRVV). Residue selenocysteine 387 is a non-standard amino acid, selenocysteine.

It belongs to the CDP-alcohol phosphatidyltransferase class-I family. It depends on Mg(2+) as a cofactor. Mn(2+) is required as a cofactor. As to expression, widely expressed. Abundant in brain, placenta, liver and pancreas, followed by heart, skeletal muscle, lung and kidney. In brain it is strongly expressed in cerebellum, followed by the occipital pole and the frontal lobe.

The protein resides in the endoplasmic reticulum membrane. It carries out the reaction CDP-ethanolamine + a 1,2-diacyl-sn-glycerol = a 1,2-diacyl-sn-glycero-3-phosphoethanolamine + CMP + H(+). It catalyses the reaction 1-O-alkyl-2-acyl-sn-glycerol + CDP-ethanolamine = a 1-O-alkyl-2-acyl-sn-glycero-3-phosphoethanolamine + CMP + H(+). It functions in the pathway phospholipid metabolism; phosphatidylethanolamine biosynthesis; phosphatidylethanolamine from ethanolamine: step 3/3. Functionally, ethanolaminephosphotransferase that catalyzes the transfer of phosphoethanolamine (PE) from CDP-ethanolamine to lipid acceptors, the final step in the synthesis of PE via the 'Kennedy' pathway. PE is the second most abundant phospholipid of membranes in mammals and is involved in various membrane-related cellular processes. The enzyme is critical for the synthesis of several PE species and also catalyzes the synthesis of plasmanyl-PE, a lipid required for proper myelination and neurodevelopment, from 1-alkyl-2-acylglycerol. In Homo sapiens (Human), this protein is Ethanolaminephosphotransferase 1.